Reading from the N-terminus, the 2510-residue chain is Highly reducing polyketide synthase g433 (2510 aa).

The segment at 1 to 54 (MAPGRTDVTVAENGNGLHTAHNGVSNGTSNGTNGTSHTSNGTNSSAKTTSNGVH) is disordered. The segment covering 22–45 (NGVSNGTSNGTNGTSHTSNGTNSS) has biased composition (low complexity). The region spanning 58–477 (DIPIAIVGMG…GANAHAVIDS (420 aa)) is the Ketosynthase family 3 (KS3) domain. Catalysis depends on for beta-ketoacyl synthase activity residues Cys-229, His-365, and His-400. The interval 574–880 (FVFTGQGAQW…VPTLVRGQND (307 aa)) is malonyl-CoA:ACP transacylase (MAT) domain. The interval 942–1070 (HDLLGCQVFE…GQVKAGRADS (129 aa)) is N-terminal hotdog fold. The segment at 942–1226 (HDLLGCQVFE…NLRLAPAADD (285 aa)) is dehydratase (DH) domain. The PKS/mFAS DH domain maps to 942–1229 (HDLLGCQVFE…LAPAADDTGG (288 aa)). His-974 functions as the Proton acceptor; for dehydratase activity in the catalytic mechanism. A C-terminal hotdog fold region spans residues 1083–1229 (PRKVSSTRWY…LAPAADDTGG (147 aa)). Asp-1144 acts as the Proton donor; for dehydratase activity in catalysis. The methyltransferase (CMet) domain stretch occupies residues 1395 to 1574 (DFLGLVSHDK…FDGAEAVIYD (180 aa)). An enoyl reductase (ER) (ER) domain region spans residues 1787-2097 (GSLKTLRWVQ…KGQHMGKLVI (311 aa)). Residues 2122 to 2296 (SYLLVGGLGG…ASVLDISIIE (175 aa)) form a ketoreductase (KR) domain region. Positions 2419 to 2496 (SSVSFLANEI…KLGEAAAEGL (78 aa)) constitute a Carrier domain. Residue Ser-2456 is modified to O-(pantetheine 4'-phosphoryl)serine.

It functions in the pathway mycotoxin biosynthesis. Highly reducing polyketide synthase; part of the gene cluster that mediates the biosynthesis of 1233A, a natural compound known as an inhibitor of HMG-CoA synthase in the mevalonate pathway and with antibacterial and antifungal activities. The highly reducing polyketide synthase g433 gene is responsible for the 1233A backbone biosynthesis and the cytochrome P450 monooxygenase g430 catalyzes oxidation of the backbone. This is Highly reducing polyketide synthase g433 from Fusarium sp.